The chain runs to 435 residues: Serine--tRNA ligase (435 aa).

233–235 (TAE) is a binding site for L-serine. Residue 264 to 266 (RAE) participates in ATP binding. Glutamate 287 provides a ligand contact to L-serine. 351-354 (EISS) contacts ATP. L-serine is bound at residue serine 386.

It belongs to the class-II aminoacyl-tRNA synthetase family. Type-1 seryl-tRNA synthetase subfamily. In terms of assembly, homodimer. The tRNA molecule binds across the dimer.

Its subcellular location is the cytoplasm. It catalyses the reaction tRNA(Ser) + L-serine + ATP = L-seryl-tRNA(Ser) + AMP + diphosphate + H(+). It carries out the reaction tRNA(Sec) + L-serine + ATP = L-seryl-tRNA(Sec) + AMP + diphosphate + H(+). It functions in the pathway aminoacyl-tRNA biosynthesis; selenocysteinyl-tRNA(Sec) biosynthesis; L-seryl-tRNA(Sec) from L-serine and tRNA(Sec): step 1/1. Catalyzes the attachment of serine to tRNA(Ser). Is also able to aminoacylate tRNA(Sec) with serine, to form the misacylated tRNA L-seryl-tRNA(Sec), which will be further converted into selenocysteinyl-tRNA(Sec). This chain is Serine--tRNA ligase, found in Anaeromyxobacter dehalogenans (strain 2CP-C).